The sequence spans 520 residues: GMP synthase [glutamine-hydrolyzing] (520 aa).

A Glutamine amidotransferase type-1 domain is found at His9–Asp202. Residue Cys86 is the Nucleophile of the active site. Residues His176 and Glu178 contribute to the active site. A GMPS ATP-PPase domain is found at Trp203–Arg395. Residue Ser230–Ser236 participates in ATP binding.

Homodimer.

It carries out the reaction XMP + L-glutamine + ATP + H2O = GMP + L-glutamate + AMP + diphosphate + 2 H(+). It functions in the pathway purine metabolism; GMP biosynthesis; GMP from XMP (L-Gln route): step 1/1. In terms of biological role, catalyzes the synthesis of GMP from XMP. This Phenylobacterium zucineum (strain HLK1) protein is GMP synthase [glutamine-hydrolyzing].